Consider the following 1831-residue polypeptide: Transmembrane protein 131 homolog (1831 aa).

Residues 1 to 29 form the signal peptide; that stretch reads MVPSIHKTSNRYRTIYFFLISLLITSTFA. Residues 30–1169 are Lumenal-facing; sequence DQQAWPLPEE…QALPRPPFEN (1140 aa). Residues 118-294 are papD-L domain; that stretch reads EMDPPMMDFG…QSKQIATLVL (177 aa). The chain crosses the membrane as a helical span at residues 1170–1190; that stretch reads IMYYSCVTALIFCLVCVLACA. Residues 1191-1831 are Cytoplasmic-facing; it reads YLEGDRAIAV…TDNENDEKNN (641 aa). Residues 1223–1234 are compositionally biased toward low complexity; sequence STTTPVPTVPST. Disordered stretches follow at residues 1223–1252, 1325–1516, 1663–1759, and 1800–1831; these read STTT…RPST, GQQK…PTDD, QMKR…VSNP, and WSSS…EKNN. The segment covering 1338–1349 has biased composition (acidic residues); sequence PEFDEVEEEELA. Low complexity-rich tracts occupy residues 1394 to 1407 and 1435 to 1448; these read PIIV…PPVQ and QVPP…TPKT. Residues 1455–1467 show a composition bias toward basic and acidic residues; that stretch reads EPEKPIKPSEQKK. Positions 1480–1497 are enriched in polar residues; sequence TPSKARTPSKTPSQSNRA. Over residues 1500–1514 the composition is skewed to low complexity; it reads PASSPAPIAPTSAPT. Composition is skewed to polar residues over residues 1669–1687, 1702–1733, and 1742–1758; these read SPSQ…SPQK, NQSS…NSIQ, and WGDN…TVSN. Low complexity predominate over residues 1808–1820; sequence PPTQQPSTSQMPQ. Residues 1822–1831 show a composition bias toward acidic residues; the sequence is TDNENDEKNN.

The protein belongs to the TMEM131 family. As to quaternary structure, may interact (via PapD-L domain) with collagen proteins (via C-terminus); the interaction is direct and is involved in assembly and secretion of collagen. Predominantly expressed in the intestine and hypodermis.

It localises to the membrane. Its subcellular location is the endoplasmic reticulum membrane. In terms of biological role, collagen binding transmembrane protein involved in collagen secretion, probably by recruiting the ER-to-Golgi transport complex TRAPPIII. Required for normal development. The sequence is that of Transmembrane protein 131 homolog from Caenorhabditis elegans.